A 149-amino-acid chain; its full sequence is Alpha-amylase/trypsin inhibitor CMb (149 aa).

A signal peptide spans Met-1–Ala-24. A glycan (N-linked (GlcNAc...) asparagine) is linked at Asn-124.

It belongs to the protease inhibitor I6 (cereal trypsin/alpha-amylase inhibitor) family. Heterotetramer of one CMa, one CMb and two CMd chains. In terms of processing, five disulfide bonds, which are essential for the inhibitor activity, are probably present. Post-translationally, exists both in a glycosylated and in an unglycosylated form. The glycosylated form is a potent allergen. Endosperm.

The protein resides in the secreted. Part of a complex with inhibitory activity, but CMb is inactive as a separate subunit. This chain is Alpha-amylase/trypsin inhibitor CMb (IAT2), found in Hordeum vulgare (Barley).